The primary structure comprises 365 residues: Inositol 4-methyltransferase (365 aa).

Aspartate 232 contributes to the S-adenosyl-L-methionine binding site. Histidine 270 functions as the Proton acceptor in the catalytic mechanism.

It belongs to the class I-like SAM-binding methyltransferase superfamily. Cation-independent O-methyltransferase family. Leaves and roots. The levels found in the leaves are 25 times greater than in the roots.

The catalysed reaction is myo-inositol + S-adenosyl-L-methionine = 1D-4-O-methyl-myo-inositol + S-adenosyl-L-homocysteine + H(+). It participates in polyol metabolism; myo-inositol metabolism. Its function is as follows. Catalyzes the methylation of myo-inositol into ononitol (1D-4-O-methyl myo-inositol), the first step in the biosynthesis of the cyclic sugar pinitol which has osmoprotective properties. In Mesembryanthemum crystallinum (Common ice plant), this protein is Inositol 4-methyltransferase (IMT1).